The following is a 1060-amino-acid chain: Carbamoyl phosphate synthase large chain (1060 aa).

Residues 1–401 (MPKRTDIRKI…SLLKACRSLE (401 aa)) are carboxyphosphate synthetic domain. ATP-binding residues include Arg129, Arg169, Gly175, Gly176, Arg208, Ile210, Glu215, Gly241, Ile242, His243, Gln284, and Glu298. Residues 133-327 (KQLMEELNQP…IAKLAAKIAV (195 aa)) enclose the ATP-grasp 1 domain. Residues Gln284, Glu298, and Asn300 each coordinate Mg(2+). Mn(2+) contacts are provided by Gln284, Glu298, and Asn300. The segment at 402 to 546 (IGVDHIKIAD…YSTYAVENES (145 aa)) is oligomerization domain. The segment at 547-929 (LISDKASILV…ALYKAFEAAY (383 aa)) is carbamoyl phosphate synthetic domain. Positions 671–861 (EATLQALNIP…MAQVATKVIL (191 aa)) constitute an ATP-grasp 2 domain. ATP contacts are provided by Arg707, Ala746, Leu748, Glu752, Gly777, Val778, His779, Ser780, Gln820, and Glu832. Mg(2+)-binding residues include Gln820, Glu832, and Asn834. Residues Gln820, Glu832, and Asn834 each coordinate Mn(2+). In terms of domain architecture, MGS-like spans 930 to 1060 (LHMPDYGNIV…SRAFTLKVLD (131 aa)). An allosteric domain region spans residues 930–1060 (LHMPDYGNIV…SRAFTLKVLD (131 aa)).

The protein belongs to the CarB family. As to quaternary structure, composed of two chains; the small (or glutamine) chain promotes the hydrolysis of glutamine to ammonia, which is used by the large (or ammonia) chain to synthesize carbamoyl phosphate. Tetramer of heterodimers (alpha,beta)4. Requires Mg(2+) as cofactor. Mn(2+) is required as a cofactor.

The enzyme catalyses hydrogencarbonate + L-glutamine + 2 ATP + H2O = carbamoyl phosphate + L-glutamate + 2 ADP + phosphate + 2 H(+). The catalysed reaction is hydrogencarbonate + NH4(+) + 2 ATP = carbamoyl phosphate + 2 ADP + phosphate + 2 H(+). The protein operates within amino-acid biosynthesis; L-arginine biosynthesis; carbamoyl phosphate from bicarbonate: step 1/1. It functions in the pathway pyrimidine metabolism; UMP biosynthesis via de novo pathway; (S)-dihydroorotate from bicarbonate: step 1/3. Large subunit of the glutamine-dependent carbamoyl phosphate synthetase (CPSase). CPSase catalyzes the formation of carbamoyl phosphate from the ammonia moiety of glutamine, carbonate, and phosphate donated by ATP, constituting the first step of 2 biosynthetic pathways, one leading to arginine and/or urea and the other to pyrimidine nucleotides. The large subunit (synthetase) binds the substrates ammonia (free or transferred from glutamine from the small subunit), hydrogencarbonate and ATP and carries out an ATP-coupled ligase reaction, activating hydrogencarbonate by forming carboxy phosphate which reacts with ammonia to form carbamoyl phosphate. The protein is Carbamoyl phosphate synthase large chain of Streptococcus agalactiae serotype Ia (strain ATCC 27591 / A909 / CDC SS700).